A 334-amino-acid polypeptide reads, in one-letter code: F-box protein AUF1 (334 aa).

Residues 1–49 (MDAFDAIPDPVVIDILNRVGDVKTLIRCRSVSKRFNSLATQSESLLLQL) enclose the F-box domain.

Part of a SCF (ASK-cullin-F-box) protein ligase complex. Interacts with SKP1A/ASK1, SKP1B/ASK2, ASK11 and ASK13.

It localises to the nucleus. It functions in the pathway protein modification; protein ubiquitination. Its function is as follows. Component of SCF(ASK-cullin-F-box) E3 ubiquitin ligase complexes, which may mediate the ubiquitination and subsequent proteasomal degradation of target proteins. Involved in the control of basipetal and acropetal auxin transport by promoting the distribution and expression of the auxin transporter PIN2. Promotes cytokinin-mediated cell expansion in the root elongation and differentiation zone, without affecting root cell division. The protein is F-box protein AUF1 of Arabidopsis thaliana (Mouse-ear cress).